A 252-amino-acid polypeptide reads, in one-letter code: MILHAQAKHGKPGLPWLVFLHGFSGDCLEWQEVGEAFADYSRLYVDLPGHGGSAAISVDGFDDVTDLLRKTLVSYNILSFWLVGYSLGGRVAMMAACQGLAGLCGVVVEGGHPGLQNAEQRAERQRSDRQWAQRFRSEPLTAVFADWYQQPVFASLNDDQRRELVVLRSNNNGATLAAMLEATSLAVQPDLRANLSARTFAFYYLCGERDSKFRALAAELAADCHVIPRAGHNAHRENPAGVIASLAQILRF.

Belongs to the AB hydrolase superfamily. MenH family. In terms of assembly, monomer.

The enzyme catalyses 5-enolpyruvoyl-6-hydroxy-2-succinyl-cyclohex-3-ene-1-carboxylate = (1R,6R)-6-hydroxy-2-succinyl-cyclohexa-2,4-diene-1-carboxylate + pyruvate. It functions in the pathway quinol/quinone metabolism; 1,4-dihydroxy-2-naphthoate biosynthesis; 1,4-dihydroxy-2-naphthoate from chorismate: step 3/7. Its pathway is quinol/quinone metabolism; menaquinone biosynthesis. Functionally, catalyzes a proton abstraction reaction that results in 2,5-elimination of pyruvate from 2-succinyl-5-enolpyruvyl-6-hydroxy-3-cyclohexene-1-carboxylate (SEPHCHC) and the formation of 2-succinyl-6-hydroxy-2,4-cyclohexadiene-1-carboxylate (SHCHC). This chain is 2-succinyl-6-hydroxy-2,4-cyclohexadiene-1-carboxylate synthase, found in Escherichia coli O157:H7.